The sequence spans 761 residues: 1,4-alpha-glucan branching enzyme GlgB (761 aa).

Residue Asp-431 is the Nucleophile of the active site. The Proton donor role is filled by Glu-484.

This sequence belongs to the glycosyl hydrolase 13 family. GlgB subfamily. Monomer.

The enzyme catalyses Transfers a segment of a (1-&gt;4)-alpha-D-glucan chain to a primary hydroxy group in a similar glucan chain.. It participates in glycan biosynthesis; glycogen biosynthesis. Catalyzes the formation of the alpha-1,6-glucosidic linkages in glycogen by scission of a 1,4-alpha-linked oligosaccharide from growing alpha-1,4-glucan chains and the subsequent attachment of the oligosaccharide to the alpha-1,6 position. In Synechococcus sp. (strain WH7803), this protein is 1,4-alpha-glucan branching enzyme GlgB.